Here is a 190-residue protein sequence, read N- to C-terminus: Peptidyl-tRNA hydrolase (190 aa).

Tyr14 contacts tRNA. The active-site Proton acceptor is the His19. Positions 64, 66, and 113 each coordinate tRNA.

It belongs to the PTH family. Monomer.

The protein localises to the cytoplasm. The catalysed reaction is an N-acyl-L-alpha-aminoacyl-tRNA + H2O = an N-acyl-L-amino acid + a tRNA + H(+). Hydrolyzes ribosome-free peptidyl-tRNAs (with 1 or more amino acids incorporated), which drop off the ribosome during protein synthesis, or as a result of ribosome stalling. Functionally, catalyzes the release of premature peptidyl moieties from peptidyl-tRNA molecules trapped in stalled 50S ribosomal subunits, and thus maintains levels of free tRNAs and 50S ribosomes. This is Peptidyl-tRNA hydrolase from Gemmatimonas aurantiaca (strain DSM 14586 / JCM 11422 / NBRC 100505 / T-27).